Consider the following 93-residue polypeptide: Small ribosomal subunit protein uS19 (93 aa).

Belongs to the universal ribosomal protein uS19 family.

Its function is as follows. Protein S19 forms a complex with S13 that binds strongly to the 16S ribosomal RNA. The polypeptide is Small ribosomal subunit protein uS19 (Geotalea uraniireducens (strain Rf4) (Geobacter uraniireducens)).